The chain runs to 252 residues: Protein HEAT-INDUCED TAS1 TARGET 2 (252 aa).

It belongs to the heat induced plant HTT protein family. In terms of tissue distribution, expressed ubiquitously, including in seedlings, leaves, stems, inflorescences and siliques.

Its subcellular location is the cytoplasm. The protein resides in the nucleus. Its function is as follows. Mediates both basal and acquired thermotolerance via HSFA1s-directed pathways (e.g. HSFA1A, HSFA1B, and HSFA1D). Triggers the expression of HSFA1A and HSFA1B. The protein is Protein HEAT-INDUCED TAS1 TARGET 2 of Arabidopsis thaliana (Mouse-ear cress).